Consider the following 242-residue polypeptide: UPF0273 protein TM_0370 (242 aa).

A KaiC domain is found at 3–242; the sequence is KRVKTGIPGM…IYPSEGGEGR (240 aa). 30-37 contributes to the ATP binding site; sequence GGPGTGKT.

This sequence belongs to the UPF0273 family.

The protein is UPF0273 protein TM_0370 of Thermotoga maritima (strain ATCC 43589 / DSM 3109 / JCM 10099 / NBRC 100826 / MSB8).